A 414-amino-acid polypeptide reads, in one-letter code: O-methyltransferase sirM (414 aa).

Residue Asp-270 participates in S-adenosyl-L-methionine binding. His-321 functions as the Proton acceptor in the catalytic mechanism.

Belongs to the class I-like SAM-binding methyltransferase superfamily. Cation-independent O-methyltransferase family. COMT subfamily.

It functions in the pathway mycotoxin biosynthesis. In terms of biological role, O-methyltransferase; part of the gene cluster that mediates the biosynthesis of sirodesmin PL, an epipolythiodioxopiperazine (ETP) characterized by a disulfide bridged cyclic dipeptide and that acts as a phytotoxin which is involved in the blackleg didease of canola. SirD catalyzes the O-prenylation of L-tyrosine (L-Tyr) in the presence of dimethylallyl diphosphate (DMAPP) to yield 4-O-dimethylallyl-L-Tyr, and therefore represents probably the first pathway-specific enzyme in the biosynthesis of sirodesmin PL. 4-O-dimethylallyl-L-Tyr, then undergoes condensation with L-Ser in a reaction catalyzed by the non-ribosomal peptide synthase sirP to form the diketopiperazine (DKP) backbone. Further bishydroxylation of the DKP performed by the cytochrome P450 monooxygenase sirC leads to the production of the intermediate phomamide. This step is essential to form the reactive thiol group required for toxicity of sirodesmin PL. The next steps of sirodesmin biosynthesis are not well understood yet, but some predictions could be made from intermediate compounds identification. Phomamide is converted into phomalizarine via oxidation, probably by sirT. Further oxidation, methylation (by sirM or sirN) and reduction steps convert phomalizarine to deacetyl sirodesmin. Finally, acetyltransferase sirH probably acetylates deacetyl sirodesmin to produce sirodesmin PL. This is O-methyltransferase sirM from Leptosphaeria maculans (Blackleg fungus).